A 335-amino-acid chain; its full sequence is Nuclear transcription factor Y subunit gamma (335 aa).

This sequence belongs to the NFYC/HAP5 subunit family. Heterotrimeric transcription factor composed of three components, NF-YA, NF-YB and NF-YC. NF-YB and NF-YC must interact and dimerize for NF-YA association and DNA binding.

The protein resides in the nucleus. Functionally, component of the sequence-specific heterotrimeric transcription factor (NF-Y) which specifically recognizes a 5'-CCAAT-3' box motif found in the promoters of its target genes. NF-Y can function as both an activator and a repressor, depending on its interacting cofactors. This chain is Nuclear transcription factor Y subunit gamma (NFYC), found in Pongo abelii (Sumatran orangutan).